Here is a 296-residue protein sequence, read N- to C-terminus: Polyamine aminopropyltransferase (296 aa).

In terms of domain architecture, PABS spans 16-251; the sequence is HLWYFEYYTG…GMWSYTFASK (236 aa). Gln46 is an S-methyl-5'-thioadenosine binding site. Residues His77 and Asp101 each contribute to the spermidine site. S-methyl-5'-thioadenosine-binding positions include Glu121 and 152–153; that span reads NG. The active-site Proton acceptor is Asp170. Residue 170 to 173 participates in spermidine binding; sequence DSTD.

The protein belongs to the spermidine/spermine synthase family. As to quaternary structure, homodimer or homotetramer.

The protein resides in the cytoplasm. It catalyses the reaction S-adenosyl 3-(methylsulfanyl)propylamine + putrescine = S-methyl-5'-thioadenosine + spermidine + H(+). It functions in the pathway amine and polyamine biosynthesis; spermidine biosynthesis; spermidine from putrescine: step 1/1. In terms of biological role, catalyzes the irreversible transfer of a propylamine group from the amino donor S-adenosylmethioninamine (decarboxy-AdoMet) to putrescine (1,4-diaminobutane) to yield spermidine. The sequence is that of Polyamine aminopropyltransferase from Thermotoga neapolitana (strain ATCC 49049 / DSM 4359 / NBRC 107923 / NS-E).